Consider the following 539-residue polypeptide: DNA damage-binding protein CMR1 (539 aa).

The interval 22 to 89 (LNLPTEAKKE…ALKQEDLGGS (68 aa)) is disordered. Residues 27-39 (EAKKESVDPEVAP) are compositionally biased toward basic and acidic residues. WD repeat units lie at residues 182 to 223 (VTKE…EPLQ), 226 to 268 (LHHA…DVLD), 316 to 356 (LGEK…TART), 377 to 415 (NSRL…LDML), 462 to 505 (GRWV…LAHL), and 508 to 539 (ALMT…YWWE).

Belongs to the WD repeat DDB2/WDR76 family.

Functionally, DNA-binding protein that binds to both single- and double-stranded DNA. Binds preferentially to UV-damaged DNA. May be involved in DNA-metabolic processes. The sequence is that of DNA damage-binding protein CMR1 from Yarrowia lipolytica (strain CLIB 122 / E 150) (Yeast).